The chain runs to 535 residues: Serine/threonine-protein kinase C (535 aa).

One can recognise a Protein kinase domain in the interval 12-277; sequence YRIIETLGRG…AMAQTLQGNF (266 aa). ATP contacts are provided by residues 18–26 and K43; that span reads LGRGGFGET. D142 serves as the catalytic Proton acceptor. Positions 371-535 are disordered; sequence NNPPPAVEEP…GEKPIDPEQN (165 aa). The span at 402 to 421 shows a compositional bias: pro residues; sequence SPIPTPATPSPEPTPSPSPS. Residues 422 to 435 show a composition bias toward low complexity; it reads PETTSSPTEDTITP. Composition is skewed to pro residues over residues 446–464 and 472–498; these read APIPEPKPSPSPTISPQPS and TPAPVPKPSPSPTPKPTVPPQISPTPQ.

Belongs to the protein kinase superfamily. Ser/Thr protein kinase family.

It carries out the reaction L-seryl-[protein] + ATP = O-phospho-L-seryl-[protein] + ADP + H(+). The enzyme catalyses L-threonyl-[protein] + ATP = O-phospho-L-threonyl-[protein] + ADP + H(+). The sequence is that of Serine/threonine-protein kinase C (spkC) from Synechocystis sp. (strain ATCC 27184 / PCC 6803 / Kazusa).